Here is a 201-residue protein sequence, read N- to C-terminus: Protein S40-5 (201 aa).

2 disordered regions span residues 1–39 (MARGRKLTMSQSERYLGSSYSYGDSNGNSATDESELTEE) and 134–178 (SIHE…EGVG). Positions 17-29 (GSSYSYGDSNGNS) are enriched in low complexity.

This sequence belongs to the senescence regulator S40 family.

It localises to the cytoplasm. This chain is Protein S40-5, found in Arabidopsis thaliana (Mouse-ear cress).